A 151-amino-acid chain; its full sequence is Melatonin receptor type 1C (151 aa).

Residues 1–13 (CHSLRYDRLYSRR) are Cytoplasmic-facing. Residues 14 to 34 (NTCLYLLLTWMLTALATVPNF) traverse the membrane as a helical segment. Residues 35–58 (LVGSLKYDPRVFSCTFTQTASSSY) are Extracellular-facing. The chain crosses the membrane as a helical span at residues 59–79 (TVCVVLIHFLVPLGVVSFCYL). At 80–109 (RIWTLVIRVKGRVRPNPKVRAADLRNFLTM) the chain is on the cytoplasmic side. A helical transmembrane segment spans residues 110–130 (FVVFVLFAVCWAPLNFIGLAV). Residues 131-143 (AINPAKVAPNIPE) are Extracellular-facing. The helical transmembrane segment at 144–151 (WLFVTSYF) threads the bilayer.

This sequence belongs to the G-protein coupled receptor 1 family.

The protein resides in the cell membrane. Its function is as follows. High affinity receptor for melatonin. The activity of this receptor is mediated by pertussis toxin sensitive G proteins that inhibits adenylate cyclase activity. This is Melatonin receptor type 1C (mtnr1c) from Danio rerio (Zebrafish).